The primary structure comprises 328 residues: MIEKIWSGESPLWRLLLPLSWLYGLVSGAIRLCYKLKLKRAWRAPIPVVVVGNLTAGGNGKTPVVVWLVEQLQQRGIRVGVVSRGYGGKAESYPLLLSADTTTAQAGDEPVLIYQRTGAPVAVSPVRSDAVKAILAQHPDVQIIVTDDGLQHYRLARDVEIVAIDGVRRFGNGWWLPAGPMRERAGRLKSVDAVIVNGGVPRSGEIPMHLLPGQAVNLRTGTRCDVAQLEHVVAIAGIGHPPRFFATLKMCGVQPEKCVPLADHQSLNHADVSALVSAGQTLVMTEKDAVKCRAFAEENWWYLPVDAQLSGDEPAKLLAQLTSLASGH.

Residue 55–62 (TAGGNGKT) participates in ATP binding.

It belongs to the LpxK family.

It carries out the reaction a lipid A disaccharide + ATP = a lipid IVA + ADP + H(+). It participates in glycolipid biosynthesis; lipid IV(A) biosynthesis; lipid IV(A) from (3R)-3-hydroxytetradecanoyl-[acyl-carrier-protein] and UDP-N-acetyl-alpha-D-glucosamine: step 6/6. Functionally, transfers the gamma-phosphate of ATP to the 4'-position of a tetraacyldisaccharide 1-phosphate intermediate (termed DS-1-P) to form tetraacyldisaccharide 1,4'-bis-phosphate (lipid IVA). This chain is Tetraacyldisaccharide 4'-kinase, found in Escherichia coli O6:K15:H31 (strain 536 / UPEC).